The chain runs to 270 residues: Cyclic pyranopterin monophosphate synthase, mitochondrial (270 aa).

A mitochondrion-targeting transit peptide spans 1 to 32 (MISTLRRAVFLRRFPAVVSPIKRAFSSRIDDE). Substrate is bound by residues 187-189 (LCH) and 225-226 (ME). The active site involves D240.

The protein belongs to the MoaC family. In terms of assembly, homohexamer. As to expression, abundantly expressed in the roots.

It is found in the mitochondrion matrix. The catalysed reaction is (8S)-3',8-cyclo-7,8-dihydroguanosine 5'-triphosphate = cyclic pyranopterin phosphate + diphosphate. It functions in the pathway cofactor biosynthesis; molybdopterin biosynthesis. Functionally, catalyzes the conversion of (8S)-3',8-cyclo-7,8-dihydroguanosine 5'-triphosphate to cyclic pyranopterin monophosphate (cPMP). This chain is Cyclic pyranopterin monophosphate synthase, mitochondrial (CNX3), found in Arabidopsis thaliana (Mouse-ear cress).